Reading from the N-terminus, the 210-residue chain is NADH dehydrogenase [ubiquinone] iron-sulfur protein 8, mitochondrial (210 aa).

The N-terminal 34 residues, 1 to 34 (MRCLTTPMLLRALAQAARAGPPCGRSLHSSAVAA), are a transit peptide targeting the mitochondrion. 4Fe-4S ferredoxin-type domains follow at residues 102–131 (RRYP…IEAE) and 141–170 (TRYD…EGPN). Positions 111, 114, 117, 121, 150, 153, 156, and 160 each coordinate [4Fe-4S] cluster.

Belongs to the complex I 23 kDa subunit family. In terms of assembly, core subunit of respiratory chain NADH dehydrogenase (Complex I) which is composed of 45 different subunits. This is a component of the iron-sulfur (IP) fragment of the enzyme. Interacts with RAB5IF. It depends on [4Fe-4S] cluster as a cofactor.

The protein localises to the mitochondrion inner membrane. The catalysed reaction is a ubiquinone + NADH + 5 H(+)(in) = a ubiquinol + NAD(+) + 4 H(+)(out). Core subunit of the mitochondrial membrane respiratory chain NADH dehydrogenase (Complex I) which catalyzes electron transfer from NADH through the respiratory chain, using ubiquinone as an electron acceptor. Essential for the catalytic activity and assembly of complex I. The sequence is that of NADH dehydrogenase [ubiquinone] iron-sulfur protein 8, mitochondrial (NDUFS8) from Pongo abelii (Sumatran orangutan).